We begin with the raw amino-acid sequence, 151 residues long: Nucleoside diphosphate kinase (151 aa).

The ATP site is built by Lys-11, Phe-59, Arg-87, Thr-93, Arg-104, and Asn-114. The Pros-phosphohistidine intermediate role is filled by His-117.

This sequence belongs to the NDK family. Homotetramer. Requires Mg(2+) as cofactor.

The protein localises to the cytoplasm. The enzyme catalyses a 2'-deoxyribonucleoside 5'-diphosphate + ATP = a 2'-deoxyribonucleoside 5'-triphosphate + ADP. It carries out the reaction a ribonucleoside 5'-diphosphate + ATP = a ribonucleoside 5'-triphosphate + ADP. Major role in the synthesis of nucleoside triphosphates other than ATP. The ATP gamma phosphate is transferred to the NDP beta phosphate via a ping-pong mechanism, using a phosphorylated active-site intermediate. In Prochlorococcus marinus (strain MIT 9211), this protein is Nucleoside diphosphate kinase.